A 1109-amino-acid polypeptide reads, in one-letter code: Hybrid signal transduction histidine kinase F (1109 aa).

Residues 237-289 (LSTETTITKKNGEKYPAEVFVKEISDIHSNSIGIMIIVRDITDQIRLKEMNIE) form the PAC domain. One can recognise a Histidine kinase domain in the interval 324–547 (TISHEIRTPL…LFSVTLNFEQ (224 aa)). His327 carries the phosphohistidine; by autocatalysis modification. A coiled-coil region spans residues 719–760 (SNLIQTISQIDNQQQQQQQQLQQQEQEQQHQQQQLQQEQQFV). Positions 739–758 (LQQQEQEQQHQQQQLQQEQQ) are enriched in low complexity. A disordered region spans residues 739-819 (LQQQEQEQQH…TSSDSGESDE (81 aa)). Residues 767 to 782 (DSSEKKTTPKKDRGKY) are compositionally biased toward basic and acidic residues. Residues 928–1048 (RILLVDDNAV…PLGELVKKYL (121 aa)) form the Response regulatory domain. Residue Asp977 is modified to 4-aspartylphosphate. The span at 1052 to 1099 (NNNNNNNNNNNNNNNNNSNNNNSNSNSNPNSNSNSNSNSNSNPNQNPN) shows a compositional bias: low complexity. Positions 1052–1109 (NNNNNNNNNNNNNNNNNSNNNNSNSNSNPNSNSNSNSNSNSNPNQNPNYCNNLPTDFI) are disordered. Positions 1100-1109 (YCNNLPTDFI) are enriched in polar residues.

It catalyses the reaction ATP + protein L-histidine = ADP + protein N-phospho-L-histidine.. In terms of biological role, acts as a receptor histidine kinase for a signal transduction pathway. This protein undergoes an ATP-dependent autophosphorylation at a conserved histidine residue in the kinase core, and a phosphoryl group is then transferred to a conserved aspartate residue in the receiver domain. The protein is Hybrid signal transduction histidine kinase F (dhkF) of Dictyostelium discoideum (Social amoeba).